We begin with the raw amino-acid sequence, 225 residues long: Octanoyltransferase (225 aa).

The BPL/LPL catalytic domain occupies 44 to 219 (RETPDEIWLL…NFIAQLTHRI (176 aa)). Residues 83–90 (RGGQITYH), 150–152 (SLG), and 163–165 (GIA) each bind substrate. Catalysis depends on C181, which acts as the Acyl-thioester intermediate.

It belongs to the LipB family.

The protein localises to the cytoplasm. It carries out the reaction octanoyl-[ACP] + L-lysyl-[protein] = N(6)-octanoyl-L-lysyl-[protein] + holo-[ACP] + H(+). Its pathway is protein modification; protein lipoylation via endogenous pathway; protein N(6)-(lipoyl)lysine from octanoyl-[acyl-carrier-protein]: step 1/2. Functionally, catalyzes the transfer of endogenously produced octanoic acid from octanoyl-acyl-carrier-protein onto the lipoyl domains of lipoate-dependent enzymes. Lipoyl-ACP can also act as a substrate although octanoyl-ACP is likely to be the physiological substrate. The sequence is that of Octanoyltransferase from Nitrosomonas eutropha (strain DSM 101675 / C91 / Nm57).